Here is a 346-residue protein sequence, read N- to C-terminus: Inositol 2-dehydrogenase (346 aa).

Belongs to the Gfo/Idh/MocA family. Homotetramer.

The enzyme catalyses myo-inositol + NAD(+) = scyllo-inosose + NADH + H(+). Involved in the oxidation of myo-inositol (MI) to 2-keto-myo-inositol (2KMI or 2-inosose). The protein is Inositol 2-dehydrogenase of Rhodococcus erythropolis (strain PR4 / NBRC 100887).